A 417-amino-acid chain; its full sequence is Serine hydroxymethyltransferase 1 (417 aa).

(6S)-5,6,7,8-tetrahydrofolate-binding positions include L121 and 125-127; that span reads GHL. K229 is subject to N6-(pyridoxal phosphate)lysine. 354 to 356 is a (6S)-5,6,7,8-tetrahydrofolate binding site; the sequence is SPF.

It belongs to the SHMT family. Homodimer. Pyridoxal 5'-phosphate serves as cofactor.

The protein resides in the cytoplasm. It catalyses the reaction (6R)-5,10-methylene-5,6,7,8-tetrahydrofolate + glycine + H2O = (6S)-5,6,7,8-tetrahydrofolate + L-serine. It functions in the pathway one-carbon metabolism; tetrahydrofolate interconversion. Its pathway is amino-acid biosynthesis; glycine biosynthesis; glycine from L-serine: step 1/1. Its function is as follows. Catalyzes the reversible interconversion of serine and glycine with tetrahydrofolate (THF) serving as the one-carbon carrier. This reaction serves as the major source of one-carbon groups required for the biosynthesis of purines, thymidylate, methionine, and other important biomolecules. Also exhibits THF-independent aldolase activity toward beta-hydroxyamino acids, producing glycine and aldehydes, via a retro-aldol mechanism. The chain is Serine hydroxymethyltransferase 1 from Pseudomonas syringae pv. syringae (strain B728a).